The following is a 263-amino-acid chain: Probable endonuclease lcl3 (263 aa).

The tract at residues 1 to 21 is disordered; it reads MGWLDFSSKSKKEEKDDTRPS. The span at 8–19 shows a compositional bias: basic and acidic residues; it reads SKSKKEEKDDTR. Residues 41 to 59 form a helical membrane-spanning segment; it reads TVIPTILLTTTILVSTRLY. Residues 80-240 form the TNase-like domain; that stretch reads RSLFGTVTRV…KKKKLGMWSG (161 aa). The active site involves Arg-131. Asp-136 contributes to the Ca(2+) binding site. Residues Glu-139 and Arg-179 contribute to the active site. Residues 236–263 are disordered; that stretch reads GMWSGKKKDYESPRDYKTRTANAAKMLK. The segment covering 241 to 253 has biased composition (basic and acidic residues); the sequence is KKKDYESPRDYKT.

It belongs to the LCL3 family.

It is found in the mitochondrion. The protein resides in the membrane. The polypeptide is Probable endonuclease lcl3 (lcl3) (Botryotinia fuckeliana (strain B05.10) (Noble rot fungus)).